The primary structure comprises 125 residues: C-X-C motif chemokine 9 (125 aa).

The N-terminal stretch at 1–21 (MKKSAPLFLGIIFLTLTGVQG) is a signal peptide. Disulfide bonds link C30/C57 and C32/C73. The interval 91–125 (QVNQKKKQRKGKKYKKTKKVPKVKRSQRPSQKKTT) is disordered. Residues 93–125 (NQKKKQRKGKKYKKTKKVPKVKRSQRPSQKKTT) show a composition bias toward basic residues.

The protein belongs to the intercrine alpha (chemokine CxC) family.

It localises to the secreted. Its function is as follows. Cytokine that affects the growth, movement, or activation state of cells that participate in immune and inflammatory response. Chemotactic for activated T-cells. Binds to CXCR3. In Bos taurus (Bovine), this protein is C-X-C motif chemokine 9 (CXCL9).